An 849-amino-acid chain; its full sequence is Dopamine receptor 2 (849 aa).

Residues 1-39 (MEAGETWNVSLEWPPPSLDLSTITQTPSTIVGSGIPLNY) lie on the Extracellular side of the membrane. An N-linked (GlcNAc...) asparagine glycan is attached at Asn8. A helical membrane pass occupies residues 40 to 60 (AGLSLIVIPLITLLGNLLVII). Residues 61-70 (SVLRYRALQS) are Cytoplasmic-facing. The helical transmembrane segment at 71 to 91 (AINFLILGLAVADLLVAIIVM) threads the bilayer. Over 92–112 (PYAVYVYVTNGDWYLGNLMCD) the chain is Extracellular. Cys111 and Cys190 are oxidised to a cystine. A helical membrane pass occupies residues 113–133 (IYMASDVCCSTASILLLAVIS). At 134 to 155 (FDRYRAVSLPIQYSRQSQNVKR) the chain is on the cytoplasmic side. Residues 156-176 (VWTLIAVIWLVSLTLASPMVF) traverse the membrane as a helical segment. Over 177 to 203 (GVNVRPPDANPYECRFYNAEFSILSSM) the chain is Extracellular. The required for the interaction with gpa-14 stretch occupies residues 183-849 (PDANPYECRF…HHFSNKQAHV (667 aa)). Residues 204-224 (ISFVIPCFLVLFVYIRIIIAL) traverse the membrane as a helical segment. Residues 225–759 (KKREKAAKMR…QRKEKRATKT (535 aa)) lie on the Cytoplasmic side of the membrane. A disordered region spans residues 450-515 (RRSSYADDSQ…NNSRTASITN (66 aa)). Residues 457–470 (DSQPTSSQTSSGDG) are compositionally biased toward low complexity. Residues 477 to 498 (GQKRFRNLSRNYSTKHHRKVVK) show a composition bias toward basic residues. The segment covering 501 to 515 (RGNSRNNSRTASITN) has biased composition (polar residues). The chain crosses the membrane as a helical span at residues 760–780 (LGVVVGVFLVCWVPFFVINIL). Over 781-798 (NAVCILLNKDSCQVGYDL) the chain is Extracellular. The helical transmembrane segment at 799–819 (FFYCTWIGYMNSFMNPIIYTI) threads the bilayer. Residues 820–849 (FNTEFRRAFKSIIFGRNSTRHHFSNKQAHV) are Cytoplasmic-facing.

The protein belongs to the G-protein coupled receptor 1 family. Interacts (via C-terminus) with the G-alpha protein gpa-14; the interaction is direct. As to expression, expressed in all dopaminergic neurons. Expressed in neurons around the nerve ring and the posterior side of the body including PDE neurons. In hermaphrodites, expressed in the head and tail ganglia including in the RIA interneuron pair, and in a subset of sublateral interneurons and the PDA neuron in the tail. Expressed in cholinergic SIA neurons. Also expressed in the male tail. In males, expressed in the dorsal spicule protractor, ventral spicule protractor, dorsal spicule retractor and ventral spicule retractor muscles and the sensory post-cloacal sensilla B (PCB) neuron. In males, expressed in the sensory hook neurons HOA.

The protein resides in the cell membrane. In terms of biological role, G-protein coupled receptor which binds to the neurotransmitter dopamine with high affinity leading to the activation of an associated G-protein and downstream signaling pathways. Couples to G-proteins to inhibit adenylate cyclase (AC) activity and cAMP production. Inhibits synaptic vesicle fusion to negatively regulate the release of dopamine at dopaminergic neuron synapses. Antagonizes octopamine signaling in response to food by promoting the dopamine-mediated suppression of crh-1/CREB1 transcription factor activation in cholinergic SIA neurons. This is most likely in association with the G(o)-alpha G-protein subunit goa-1. In association with the G-alpha protein gpa-14, modulates two types of learning behavior: touch habituation and chemosensory associative conditioning. May act partly via tsp-17 to negatively regulate dopamine reuptake transporter dat-1 activity. Plays a role in behavioral plasticity and regulates the decision-making process when conflicting alternatives are present. Promotes male mating behavior by antagonizing acetylcholine signaling to control the protrusions of copulatory spicules from the tail of males during hermaphrodite vulval location. Modulates unc-7 activity at gap junctions to promote inhibitory neuronal signaling transduction between chemosensory and mechanosensory neurons, and thus ensures spicule insertion attempts are confined to the hermaphrodite vulva during copulation. G-protein coupled receptor which binds to the neurotransmitter dopamine with high affinity leading to the activation of an associated G-protein and downstream signaling pathways. Couples to G-proteins to inhibit adenylate cyclase (AC) activity and cAMP production. The protein is Dopamine receptor 2 of Caenorhabditis elegans.